The chain runs to 216 residues: Ornithine decarboxylase antizyme 1 (216 aa).

Belongs to the ODC antizyme family. Interacts with ODC1 and thereby sterically blocks ODC homodimerization.

In terms of biological role, ornithine decarboxylase (ODC) antizyme protein that negatively regulates ODC activity and intracellular polyamine biosynthesis and uptake in response to increased intracellular polyamine levels. Binds to ODC monomers, inhibiting the assembly of the functional ODC homodimer, and targets the monomers for ubiquitin-independent proteolytic destruction by the 26S proteasome. The chain is Ornithine decarboxylase antizyme 1 (oaz1) from Xenopus laevis (African clawed frog).